Consider the following 394-residue polypeptide: Elongation factor Tu 2 (394 aa).

A tr-type G domain is found at 10-204; sequence KPHVNVGTIG…ALDSYIPEPE (195 aa). The segment at 19 to 26 is G1; sequence GHVDHGKT. Position 19–26 (19–26) interacts with GTP; it reads GHVDHGKT. Thr-26 contributes to the Mg(2+) binding site. The interval 60 to 64 is G2; the sequence is GITIS. The segment at 81–84 is G3; the sequence is DCPG. GTP contacts are provided by residues 81–85 and 136–139; these read DCPGH and NKCD. The segment at 136 to 139 is G4; it reads NKCD. The interval 174 to 176 is G5; it reads SAL.

This sequence belongs to the TRAFAC class translation factor GTPase superfamily. Classic translation factor GTPase family. EF-Tu/EF-1A subfamily. Monomer.

It localises to the cytoplasm. The enzyme catalyses GTP + H2O = GDP + phosphate + H(+). In terms of biological role, GTP hydrolase that promotes the GTP-dependent binding of aminoacyl-tRNA to the A-site of ribosomes during protein biosynthesis. In Pseudoalteromonas translucida (strain TAC 125), this protein is Elongation factor Tu 2.